The primary structure comprises 118 residues: uncharacterized protein (118 aa).

3 helical membrane passes run Ile-17–Leu-37, Ile-60–Phe-80, and Tyr-90–Trp-110.

The protein localises to the membrane. This is an uncharacterized protein from Acanthamoeba polyphaga mimivirus (APMV).